Here is a 346-residue protein sequence, read N- to C-terminus: Ketol-acid reductoisomerase (NADP(+)) (346 aa).

Residues 1–141 (KKNSILKKNQ…GAHHAGVLES (141 aa)) enclose the KARI N-terminal Rossmann domain. Residues Ser-11 and 41-43 (DKQ) each bind NADP(+). His-65 is an active-site residue. Residue Gly-91 participates in NADP(+) binding. 2 KARI C-terminal knotted domains span residues 142 to 286 (SFVA…PEQE) and 287 to 346 (YYDH…NKVI). Mg(2+)-binding residues include Asp-150, Glu-154, Glu-322, and Glu-326.

This sequence belongs to the ketol-acid reductoisomerase family. Mg(2+) serves as cofactor.

The catalysed reaction is (2R)-2,3-dihydroxy-3-methylbutanoate + NADP(+) = (2S)-2-acetolactate + NADPH + H(+). It catalyses the reaction (2R,3R)-2,3-dihydroxy-3-methylpentanoate + NADP(+) = (S)-2-ethyl-2-hydroxy-3-oxobutanoate + NADPH + H(+). It functions in the pathway amino-acid biosynthesis; L-isoleucine biosynthesis; L-isoleucine from 2-oxobutanoate: step 2/4. It participates in amino-acid biosynthesis; L-valine biosynthesis; L-valine from pyruvate: step 2/4. Involved in the biosynthesis of branched-chain amino acids (BCAA). Catalyzes an alkyl-migration followed by a ketol-acid reduction of (S)-2-acetolactate (S2AL) to yield (R)-2,3-dihydroxy-isovalerate. In the isomerase reaction, S2AL is rearranged via a Mg-dependent methyl migration to produce 3-hydroxy-3-methyl-2-ketobutyrate (HMKB). In the reductase reaction, this 2-ketoacid undergoes a metal-dependent reduction by NADPH to yield (R)-2,3-dihydroxy-isovalerate. The protein is Ketol-acid reductoisomerase (NADP(+)) (ilvC) of Buchnera aphidicola subsp. Uroleucon rurale.